The primary structure comprises 412 residues: Putative phosphate permease PF1020 (412 aa).

Transmembrane regions (helical) follow at residues 7–27, 50–70, 88–108, 119–139, 143–163, 187–207, 213–233, 298–318, 335–355, and 384–404; these read MLADPILLITILLGFAMAWAI, AVIIAGVLEFMGAYFFGKTVT, VLIFGSIAALIGATIWLVIAT, SIIGGIVGYGIVYGGMSIVNW, IKVVLSWILSPIVGAIFAYLV, FWIGLAFVVIGTMFYIKVLHG, GFLKYGMPAGILTFIVVSLIL, WILALGGLGIAIGVATYGYKV, FTIDFSAATVVLIASWLGMPI, and DIIISWFVTVPAAGVIAGIIF.

The protein belongs to the inorganic phosphate transporter (PiT) (TC 2.A.20) family.

It localises to the cell membrane. Potential transporter for phosphate. The polypeptide is Putative phosphate permease PF1020 (Pyrococcus furiosus (strain ATCC 43587 / DSM 3638 / JCM 8422 / Vc1)).